Here is a 167-residue protein sequence, read N- to C-terminus: MANNQASLLLQKQLKDLCKKPVDGFSAGLVDEKNVFQWSVSIMGPPDTLYEGGFFNAIMSFPENYPVSPPTVTFTSEMWHPNVYSDGKVCISILHPPGDDPHGYELASERWTPVHTVESIVLSIISMLSGPNDESPANVEAAKEWRDNRAEFRKKVSRCVRRSQEML.

Residue Ala-2 is modified to N-acetylalanine. In terms of domain architecture, UBC core spans 5 to 165; sequence QASLLLQKQL…VSRCVRRSQE (161 aa). Residue Cys-90 is the Glycyl thioester intermediate of the active site.

Belongs to the ubiquitin-conjugating enzyme family.

It carries out the reaction S-ubiquitinyl-[E1 ubiquitin-activating enzyme]-L-cysteine + [E2 ubiquitin-conjugating enzyme]-L-cysteine = [E1 ubiquitin-activating enzyme]-L-cysteine + S-ubiquitinyl-[E2 ubiquitin-conjugating enzyme]-L-cysteine.. It functions in the pathway protein modification; protein ubiquitination. Accepts the ubiquitin from the E1 complex and catalyzes its covalent attachment to other proteins. Involved in the formation of multiubiquitin chains. Signal the protein for selective degradation. This Arabidopsis thaliana (Mouse-ear cress) protein is Ubiquitin-conjugating enzyme E2 14 (UBC14).